The following is a 1194-amino-acid chain: Multidrug efflux ATP-binding/permease protein BCG_0231 (1194 aa).

6 consecutive transmembrane segments (helical) span residues 20-40 (LLLGFGAALAGTVIAVLVPLV), 56-76 (LAPWAVVLVAAAGATYLLTYV), 130-150 (LLFDVPNVLRHVLTLLLGVAV), 153-173 (WLSVPLALLAVLLVPVIGLIA), 258-278 (FALGGWMAAQGSITVGTFVAF), and 279-299 (WACLTLLARPACDLAGMLTIA). The ABC transmembrane type-1 1 domain occupies 21–301 (LLGFGAALAG…LAGMLTIAQQ (281 aa)). One can recognise an ABC transporter 1 domain in the interval 334 to 568 (LEFQRVSFGY…CPRYRELLSP (235 aa)). An ATP-binding site is contributed by 367-374 (GAPGSGKS). 6 helical membrane passes run 628–648 (ALSLLLVAVQTCAGLLPPLLI), 660–680 (VLSALWWAALAGTATVVIRWV), 743–763 (LVVAVISVVTLVGILVALLAI), 765–785 (ARLVLLIFTTMPVLALATWQF), 847–867 (LLALYYPFVALLCSLATTLVL), and 878–898 (VISVGALVTYLLYIELLYTPI). The ABC transmembrane type-1 2 domain occupies 628–910 (ALSLLLVAVQ…LAQMFDDYQR (283 aa)). In terms of domain architecture, ABC transporter 2 spans 942–1177 (VVFDAVHYSY…GGHYSRLWAA (236 aa)). Position 976–983 (976–983 (GSTGSGKS)) interacts with ATP.

It belongs to the ABC transporter superfamily. Lipid exporter (TC 3.A.1.106) family.

The protein resides in the cell inner membrane. Functionally, overexpression increases resistance to chloramphenicol, ampicillin, streptomycin, tetracyclin and vancomycin. The polypeptide is Multidrug efflux ATP-binding/permease protein BCG_0231 (Mycobacterium bovis (strain BCG / Pasteur 1173P2)).